The primary structure comprises 290 residues: Xyloglucan endotransglucosylase/hydrolase protein 9 (290 aa).

An N-terminal signal peptide occupies residues 1–26 (MVGMDLFKCVMMIMVLVVSCGEAVSG). One can recognise a GH16 domain in the interval 27–215 (AKFDELYRSS…WSHAPFVASY (189 aa)). N-linked (GlcNAc...) asparagine glycosylation is present at asparagine 55. Glutamate 101 acts as the Nucleophile in catalysis. Residue glutamate 105 is the Proton donor of the active site. Glutamate 105 serves as a coordination point for xyloglucan. The N-linked (GlcNAc...) asparagine glycan is linked to asparagine 109. Residues 118–120 (QTN), 128–130 (NRE), 194–195 (DW), and glycine 199 each bind xyloglucan. Cystine bridges form between cysteine 223–cysteine 234 and cysteine 271–cysteine 284. Arginine 276 provides a ligand contact to xyloglucan.

The protein belongs to the glycosyl hydrolase 16 family. XTH group 1 subfamily. Contains at least one intrachain disulfide bond essential for its enzymatic activity. As to expression, highly expressed in shoot apices. In the vegetative and reproductive phases, it accumulates in the shoot apex region, where cell division is most active. In the reproductive phase, it is also expressed in flower buds, flower stalks and internodes bearing flowers.

It is found in the secreted. It localises to the cell wall. Its subcellular location is the extracellular space. The protein resides in the apoplast. It catalyses the reaction breaks a beta-(1-&gt;4) bond in the backbone of a xyloglucan and transfers the xyloglucanyl segment on to O-4 of the non-reducing terminal glucose residue of an acceptor, which can be a xyloglucan or an oligosaccharide of xyloglucan.. Catalyzes xyloglucan endohydrolysis (XEH) and/or endotransglycosylation (XET). Cleaves and religates xyloglucan polymers, an essential constituent of the primary cell wall, and thereby participates in cell wall construction of growing tissues. Involved in internodal cell elongation. The protein is Xyloglucan endotransglucosylase/hydrolase protein 9 (XTH9) of Arabidopsis thaliana (Mouse-ear cress).